Consider the following 447-residue polypeptide: Tetratricopeptide repeat protein 23 (447 aa).

TPR repeat units lie at residues 45 to 78 (LHLCEEKAKSYSNSHEYKQAVHELVRCVALTRIC), 137 to 170 (IELFHTMGRALLSLQKFKEAAENLTKAERLSKEL), 186 to 219 (ARIRLSFAQVYQGQKKSKEALSHYQAALEYVEIS), and 356 to 389 (AETYRLLGGADLAQGNHSGARKKLKKCLQIQTLL).

Found Associated with the EvC complex composed of EFCAB7, IQCE, EVC2 and EVC.

It is found in the cell projection. It localises to the cilium. Its function is as follows. Participates positively in the ciliary Hedgehog (Hh) signaling. This chain is Tetratricopeptide repeat protein 23 (TTC23), found in Homo sapiens (Human).